Consider the following 197-residue polypeptide: Imidazoleglycerol-phosphate dehydratase (197 aa).

The protein belongs to the imidazoleglycerol-phosphate dehydratase family.

The protein resides in the cytoplasm. The enzyme catalyses D-erythro-1-(imidazol-4-yl)glycerol 3-phosphate = 3-(imidazol-4-yl)-2-oxopropyl phosphate + H2O. The protein operates within amino-acid biosynthesis; L-histidine biosynthesis; L-histidine from 5-phospho-alpha-D-ribose 1-diphosphate: step 6/9. The chain is Imidazoleglycerol-phosphate dehydratase from Nitrosomonas europaea (strain ATCC 19718 / CIP 103999 / KCTC 2705 / NBRC 14298).